Reading from the N-terminus, the 121-residue chain is Large ribosomal subunit protein uL14 (121 aa).

The protein belongs to the universal ribosomal protein uL14 family. In terms of assembly, part of the 50S ribosomal subunit. Forms a cluster with proteins L3 and L19. In the 70S ribosome, L14 and L19 interact and together make contacts with the 16S rRNA in bridges B5 and B8.

Its function is as follows. Binds to 23S rRNA. Forms part of two intersubunit bridges in the 70S ribosome. This is Large ribosomal subunit protein uL14 from Mycoplasmopsis synoviae (strain 53) (Mycoplasma synoviae).